A 945-amino-acid chain; its full sequence is Isoleucine--tRNA ligase (945 aa).

The 'HIGH' region signature appears at 66–76 (PYANGDIHLGH). Glu581 contributes to the L-isoleucyl-5'-AMP binding site. A 'KMSKS' region motif is present at residues 622–626 (KMSKS). An ATP-binding site is contributed by Lys625. Zn(2+) is bound by residues Cys908, Cys911, Cys928, and Cys931.

Belongs to the class-I aminoacyl-tRNA synthetase family. IleS type 1 subfamily. As to quaternary structure, monomer. Requires Zn(2+) as cofactor.

The protein localises to the cytoplasm. The enzyme catalyses tRNA(Ile) + L-isoleucine + ATP = L-isoleucyl-tRNA(Ile) + AMP + diphosphate. Catalyzes the attachment of isoleucine to tRNA(Ile). As IleRS can inadvertently accommodate and process structurally similar amino acids such as valine, to avoid such errors it has two additional distinct tRNA(Ile)-dependent editing activities. One activity is designated as 'pretransfer' editing and involves the hydrolysis of activated Val-AMP. The other activity is designated 'posttransfer' editing and involves deacylation of mischarged Val-tRNA(Ile). The polypeptide is Isoleucine--tRNA ligase (Burkholderia ambifaria (strain ATCC BAA-244 / DSM 16087 / CCUG 44356 / LMG 19182 / AMMD) (Burkholderia cepacia (strain AMMD))).